Reading from the N-terminus, the 233-residue chain is Large ribosomal subunit protein uL1 (233 aa).

Belongs to the universal ribosomal protein uL1 family. Part of the 50S ribosomal subunit.

In terms of biological role, binds directly to 23S rRNA. The L1 stalk is quite mobile in the ribosome, and is involved in E site tRNA release. Protein L1 is also a translational repressor protein, it controls the translation of the L11 operon by binding to its mRNA. The protein is Large ribosomal subunit protein uL1 of Finegoldia magna (strain ATCC 29328 / DSM 20472 / WAL 2508) (Peptostreptococcus magnus).